A 159-amino-acid chain; its full sequence is Small ribosomal subunit protein uS15 (159 aa).

The segment covering 1-16 has biased composition (basic residues); that stretch reads MNKRKEKGKSHSKRPV. The tract at residues 1–22 is disordered; that stretch reads MNKRKEKGKSHSKRPVRNTPPR.

Belongs to the universal ribosomal protein uS15 family. As to quaternary structure, part of the 30S ribosomal subunit.

The protein is Small ribosomal subunit protein uS15 of Ignicoccus hospitalis (strain KIN4/I / DSM 18386 / JCM 14125).